Here is a 271-residue protein sequence, read N- to C-terminus: Zinc finger protein 501 (271 aa).

C2H2-type zinc fingers lie at residues 22–44 (SKCSECGRFFTQRSSLTQHQRIH), 50–72 (YVCSECGSCFRKQSNLTQHLRIH), 78–100 (YKCNECEKAFQTKAILVQHLRIH), 106–128 (YKCNECGKAFCQSPSLIKHQRIH), 134–156 (YKCAECGKAFSQSVCLTRHQRSH), 162–184 (FKCNECGKAFNQSACLMQHQRIH), 190–212 (YTCTECGKAFTQNSSLVEHERTH), 218–240 (YKCSECEKTFRKQAHLSEHYRIH), and 246–268 (YECFGCGKSFRHSSALLRHQRLH).

It belongs to the krueppel C2H2-type zinc-finger protein family.

It localises to the nucleus. The protein resides in the nucleolus. In terms of biological role, may be involved in transcriptional regulation. Essential for Golgi structural integrity. This chain is Zinc finger protein 501 (ZNF501), found in Pongo abelii (Sumatran orangutan).